The following is an 829-amino-acid chain: MKRAAQASDEPLKKRKTAREESSDEDEESSQRTTSQDSSQSESLSDVEDHKPSFSRPSDSQNSQGSMAHNEASNKFAMYNNVSQKLMAKMGFREGEGLGKYGQGRKEIVEASTQRGRRGLGLMLKGFQGDLNVDWEDEPEPSAIEQVSWFPESSPEIPDSDELRDWMTIGEKKLKIDDEIEFCSENLLHLLLRCKTVFDDLEGEEMRRARTRSNPYETIRGAFFLNRAAMKMANMDHVFDYMFTNPKDSQGKVLTRDKEGELLYFGDVCAGPGGFSEYVLWRRRWHAKGFGMTLKGANDFKLEDFYAAPSELFEAYYGEGGIDGDGDITRPENISAFRNFVLDSTEGRGLHFLMADGGFSVEGQENLQEILSKQLLLCQFLTALSVVRPGGHFLCKTFDLFTPFSVGLIYLLYLCFERVSLFKPVTSRPANSERYVVCKGLKPGTDAVREYMFTINLKLNQFRHSDRDVIEVVPLDIIKGDTDFFQYMIGSNESYCAVQIKALAKIHAYVRDTTLFEARQADIRKECLKLWGIPDKARVTPSTSDPKNKFYELVKGSEMDSFNSRPTALNSVNLEKLQHVLDYRCIVGGGEQLFLLALGRSQIYTWDGKAPSRWKKLENFKMELPRDTLLSVEIVQELKGEGKAQRRINAVHVLDALVLNGTDVRDQHFNQRIQMVEKFVKAVSKPSRPDMNPIRVKEVYRLEEMEKIFVRLEMKITKSSGGMPRLSYTGRDDRHFLPTGLYIIKTVNDPWTMAFSKSSKRKFFYNKQTKESTYDLPATSVAPFYVCHQDRLFWAWEEGVRVHDSQTRINPDKLSKDDVVSFIHKHYQQ.

A disordered region spans residues 1-68 (MKRAAQASDE…DSQNSQGSMA (68 aa)). A Bipartite nuclear localization signal motif is present at residues 2-16 (KRAAQASDEPLKKRK). Low complexity predominate over residues 31-44 (QRTTSQDSSQSESL). Over residues 55-68 (SRPSDSQNSQGSMA) the composition is skewed to polar residues. The G-patch domain occupies 79–125 (YNNVSQKLMAKMGFREGEGLGKYGQGRKEIVEASTQRGRRGLGLMLK). Residues 195-199 (KTVFD) and arginine 210 each bind substrate. Residues 223–442 (FFLNRAAMKM…ERYVVCKGLK (220 aa)) form the RrmJ-type SAM-dependent 2'-O-MTase domain. Asparagine 226 provides a ligand contact to S-adenosyl-L-methionine. The active site involves lysine 231. S-adenosyl-L-methionine is bound by residues 269 to 275 (CAGPGGF) and 327 to 328 (DI). Residue aspartate 356 is part of the active site. Substrate is bound at residue 366-368 (NLQ). Catalysis depends on lysine 396, which acts as the Proton acceptor. Asparagine 431 provides a ligand contact to substrate. The region spanning 745-779 (KTVNDPWTMAFSKSSKRKFFYNKQTKESTYDLPAT) is the WW domain.

It localises to the nucleus. The catalysed reaction is a 5'-end (N(7)-methyl 5'-triphosphoguanosine)-ribonucleoside in mRNA + S-adenosyl-L-methionine = a 5'-end (N(7)-methyl 5'-triphosphoguanosine)-(2'-O-methyl-ribonucleoside) in mRNA + S-adenosyl-L-homocysteine + H(+). In terms of biological role, S-adenosyl-L-methionine-dependent methyltransferase that mediates mRNA cap1 2'-O-ribose methylation to the 5'-cap structure of mRNAs. Methylates the ribose of the first nucleotide of a m(7)GpppG-capped mRNA and small nuclear RNA (snRNA) to produce m(7)GpppRm (cap1). Displays a preference for cap0 transcripts. Cap1 modification is linked to higher levels of translation. May be involved in the interferon response pathway. The protein is Cap-specific mRNA (nucleoside-2'-O-)-methyltransferase 1 (cmtr1) of Danio rerio (Zebrafish).